The following is a 310-amino-acid chain: Methionyl-tRNA formyltransferase (310 aa).

Position 112-115 (112-115 (SLLP)) interacts with (6S)-5,6,7,8-tetrahydrofolate.

It belongs to the Fmt family.

The enzyme catalyses L-methionyl-tRNA(fMet) + (6R)-10-formyltetrahydrofolate = N-formyl-L-methionyl-tRNA(fMet) + (6S)-5,6,7,8-tetrahydrofolate + H(+). In terms of biological role, attaches a formyl group to the free amino group of methionyl-tRNA(fMet). The formyl group appears to play a dual role in the initiator identity of N-formylmethionyl-tRNA by promoting its recognition by IF2 and preventing the misappropriation of this tRNA by the elongation apparatus. This is Methionyl-tRNA formyltransferase from Pelagibacter ubique (strain HTCC1062).